Consider the following 166-residue polypeptide: Phosphopantetheine adenylyltransferase (166 aa).

Serine 11 lines the substrate pocket. Residues 11–12 (SF) and histidine 19 contribute to the ATP site. Substrate is bound by residues lysine 43, alanine 76, and arginine 90. ATP is bound by residues 91–93 (GLR), glutamate 101, and 126–132 (MQPISSS).

The protein belongs to the bacterial CoaD family. Homohexamer. Mg(2+) is required as a cofactor.

Its subcellular location is the cytoplasm. It carries out the reaction (R)-4'-phosphopantetheine + ATP + H(+) = 3'-dephospho-CoA + diphosphate. It participates in cofactor biosynthesis; coenzyme A biosynthesis; CoA from (R)-pantothenate: step 4/5. Functionally, reversibly transfers an adenylyl group from ATP to 4'-phosphopantetheine, yielding dephospho-CoA (dPCoA) and pyrophosphate. This Streptococcus uberis (strain ATCC BAA-854 / 0140J) protein is Phosphopantetheine adenylyltransferase.